The chain runs to 300 residues: uncharacterized protein (300 aa).

Disordered regions lie at residues 167-186 and 224-244; these read DVFLNSSPPPHTAQVSHHEH and ADGSSLETSSMSSPRPEDASH. Over residues 224-236 the composition is skewed to polar residues; sequence ADGSSLETSSMSS.

This is an uncharacterized protein from Rattus norvegicus (Rat).